Consider the following 158-residue polypeptide: 6,7-dimethyl-8-ribityllumazine synthase (158 aa).

5-amino-6-(D-ribitylamino)uracil is bound by residues Phe24, 58–60 (AFE), and 82–84 (AVI). 87–88 (GT) lines the (2S)-2-hydroxy-3-oxobutyl phosphate pocket. Residue His90 is the Proton donor of the active site. Phe115 contacts 5-amino-6-(D-ribitylamino)uracil. Arg129 provides a ligand contact to (2S)-2-hydroxy-3-oxobutyl phosphate.

The protein belongs to the DMRL synthase family. Forms an icosahedral capsid composed of 60 subunits, arranged as a dodecamer of pentamers.

The enzyme catalyses (2S)-2-hydroxy-3-oxobutyl phosphate + 5-amino-6-(D-ribitylamino)uracil = 6,7-dimethyl-8-(1-D-ribityl)lumazine + phosphate + 2 H2O + H(+). The protein operates within cofactor biosynthesis; riboflavin biosynthesis; riboflavin from 2-hydroxy-3-oxobutyl phosphate and 5-amino-6-(D-ribitylamino)uracil: step 1/2. Catalyzes the formation of 6,7-dimethyl-8-ribityllumazine by condensation of 5-amino-6-(D-ribitylamino)uracil with 3,4-dihydroxy-2-butanone 4-phosphate. This is the penultimate step in the biosynthesis of riboflavin. The protein is 6,7-dimethyl-8-ribityllumazine synthase of Azotobacter vinelandii (strain DJ / ATCC BAA-1303).